A 141-amino-acid chain; its full sequence is Hemoglobin subunit alpha-A (141 aa).

The 141-residue stretch at 1 to 141 folds into the Globin domain; sequence VLSGTDKTNV…VGAVLTAKYR (141 aa). His-58 contacts O2. His-87 lines the heme b pocket.

The protein belongs to the globin family. As to quaternary structure, heterotetramer of two alpha chains and two beta chains. Red blood cells.

In terms of biological role, involved in oxygen transport from the lung to the various peripheral tissues. The protein is Hemoglobin subunit alpha-A (HBAA) of Struthio camelus (Common ostrich).